The chain runs to 455 residues: Ribulose bisphosphate carboxylase large chain (455 aa).

At Lys-5 the chain carries N6,N6,N6-trimethyllysine. Substrate contacts are provided by Asn-114 and Thr-164. Lys-166 functions as the Proton acceptor in the catalytic mechanism. Lys-168 is a substrate binding site. Mg(2+)-binding residues include Lys-192, Asp-194, and Glu-195. The residue at position 192 (Lys-192) is an N6-carboxylysine. Residue His-285 is the Proton acceptor of the active site. Residues Arg-286, His-318, and Ser-370 each contribute to the substrate site.

This sequence belongs to the RuBisCO large chain family. Type I subfamily. Heterohexadecamer of 8 large chains and 8 small chains; disulfide-linked. The disulfide link is formed within the large subunit homodimers. The cofactor is Mg(2+). In terms of processing, the disulfide bond which can form in the large chain dimeric partners within the hexadecamer appears to be associated with oxidative stress and protein turnover.

The protein resides in the plastid. It localises to the chloroplast. The catalysed reaction is 2 (2R)-3-phosphoglycerate + 2 H(+) = D-ribulose 1,5-bisphosphate + CO2 + H2O. The enzyme catalyses D-ribulose 1,5-bisphosphate + O2 = 2-phosphoglycolate + (2R)-3-phosphoglycerate + 2 H(+). RuBisCO catalyzes two reactions: the carboxylation of D-ribulose 1,5-bisphosphate, the primary event in carbon dioxide fixation, as well as the oxidative fragmentation of the pentose substrate in the photorespiration process. Both reactions occur simultaneously and in competition at the same active site. The chain is Ribulose bisphosphate carboxylase large chain from Lupinus latifolius (Broad-leaved lupine).